The primary structure comprises 218 residues: uncharacterized protein (218 aa).

It belongs to the HAD-like hydrolase superfamily.

Its subcellular location is the cytoplasm. The protein localises to the nucleus. This is an uncharacterized protein from Saccharomyces cerevisiae (strain ATCC 204508 / S288c) (Baker's yeast).